The primary structure comprises 54 residues: Ovomucoid (54 aa).

Positions 4 to 54 (VDCSGYPQSACPQDYVPFCGSDNKTYSNKCNFCNAVADSNGTLTLSHFGKC) constitute a Kazal-like domain. Disulfide bonds link C6/C36, C14/C33, and C22/C54. N-linked (GlcNAc...) asparagine glycosylation occurs at N43.

The protein resides in the secreted. In Gallirallus australis (Weka), this protein is Ovomucoid.